The chain runs to 340 residues: 4-hydroxy-2-oxovalerate aldolase (340 aa).

One can recognise a Pyruvate carboxyltransferase domain in the interval Val-8–Met-260. Arg-16–Asp-17 contributes to the substrate binding site. Asp-17 is a binding site for Mn(2+). His-20 serves as the catalytic Proton acceptor. Positions 170 and 199 each coordinate substrate. Mn(2+)-binding residues include His-199 and His-201. Residue Tyr-290 coordinates substrate.

It belongs to the 4-hydroxy-2-oxovalerate aldolase family.

It catalyses the reaction (S)-4-hydroxy-2-oxopentanoate = acetaldehyde + pyruvate. The chain is 4-hydroxy-2-oxovalerate aldolase from Shewanella pealeana (strain ATCC 700345 / ANG-SQ1).